The chain runs to 280 residues: Phosphatidylglycerol--prolipoprotein diacylglyceryl transferase (280 aa).

4 consecutive transmembrane segments (helical) span residues 23–43, 58–78, 93–113, and 120–140; these read LRWY…LAGV, LLFW…VLFY, IWTG…ALWW, and CTFL…LGAG. Arg-141 lines the a 1,2-diacyl-sn-glycero-3-phospho-(1'-sn-glycerol) pocket. The next 3 membrane-spanning stretches (helical) occupy residues 173–193, 200–220, and 241–261; these read PSQL…LWLY, IGAV…FVEF, and QGQI…VWAV.

The protein belongs to the Lgt family.

The protein localises to the cell inner membrane. The catalysed reaction is L-cysteinyl-[prolipoprotein] + a 1,2-diacyl-sn-glycero-3-phospho-(1'-sn-glycerol) = an S-1,2-diacyl-sn-glyceryl-L-cysteinyl-[prolipoprotein] + sn-glycerol 1-phosphate + H(+). It functions in the pathway protein modification; lipoprotein biosynthesis (diacylglyceryl transfer). Functionally, catalyzes the transfer of the diacylglyceryl group from phosphatidylglycerol to the sulfhydryl group of the N-terminal cysteine of a prolipoprotein, the first step in the formation of mature lipoproteins. This Pseudoalteromonas atlantica (strain T6c / ATCC BAA-1087) protein is Phosphatidylglycerol--prolipoprotein diacylglyceryl transferase.